We begin with the raw amino-acid sequence, 621 residues long: 1-deoxy-D-xylulose-5-phosphate synthase (621 aa).

Thiamine diphosphate contacts are provided by residues H80 and 121–123 (GHS). D152 is a Mg(2+) binding site. Residues 153-154 (GA), N181, Y288, and E370 contribute to the thiamine diphosphate site. N181 is a Mg(2+) binding site.

Belongs to the transketolase family. DXPS subfamily. In terms of assembly, homodimer. Mg(2+) is required as a cofactor. The cofactor is thiamine diphosphate.

The enzyme catalyses D-glyceraldehyde 3-phosphate + pyruvate + H(+) = 1-deoxy-D-xylulose 5-phosphate + CO2. Its pathway is metabolic intermediate biosynthesis; 1-deoxy-D-xylulose 5-phosphate biosynthesis; 1-deoxy-D-xylulose 5-phosphate from D-glyceraldehyde 3-phosphate and pyruvate: step 1/1. Functionally, catalyzes the acyloin condensation reaction between C atoms 2 and 3 of pyruvate and glyceraldehyde 3-phosphate to yield 1-deoxy-D-xylulose-5-phosphate (DXP). In Pseudoalteromonas atlantica (strain T6c / ATCC BAA-1087), this protein is 1-deoxy-D-xylulose-5-phosphate synthase.